A 430-amino-acid chain; its full sequence is Microtubule-associated protein tau (430 aa).

A compositionally biased stretch (basic and acidic residues) spans 1 to 16; that stretch reads MAEPRQEFDTAEDHAE. The disordered stretch occupies residues 1–245; it reads MAEPRQEFDT…PVPMPDLKNV (245 aa). Residue Ala-2 is modified to N-acetylalanine. Tyr-18 is modified (phosphotyrosine). Lys-31 is covalently cross-linked (Glycyl lysine isopeptide (Lys-Gly) (interchain with G-Cter in ubiquitin)). Ser-33 and Ser-48 each carry phosphoserine. A compositionally biased stretch (polar residues) spans 48–58; it reads SETSDAKSTPT. Phosphothreonine occurs at positions 56, 58, and 98. The span at 117–133 shows a compositional bias: basic and acidic residues; it reads KGKEGTGSEDRKAKGAD. Residue Thr-142 is modified to Phosphothreonine. Position 144 is an omega-N-methylarginine (Arg-144). Position 152 is an N6,N6-dimethyllysine; alternate (Lys-152). Residue Lys-152 is modified to N6-acetyllysine; alternate. Residues Thr-158, Thr-164, Thr-165, and Thr-170 each carry the phosphothreonine modification. Residues 161-203 show a composition bias toward low complexity; it reads PAKTTPSPKTPPGTGEPAKSGDRSGYSSPGSPGTPGSRSRTPS. A phosphoserine mark is found at Ser-180 and Ser-184. Tyr-186 is modified (phosphotyrosine). 3 positions are modified to phosphoserine: Ser-187, Ser-188, and Ser-191. Residues Thr-194 and Thr-201 each carry the phosphothreonine modification. Ser-203 is modified (phosphoserine). A Phosphothreonine modification is found at Thr-206. N6-acetyllysine is present on Lys-214. Thr-220 is modified (phosphothreonine). 2 positions are modified to phosphoserine: Ser-224 and Ser-226. 4 Tau/MAP repeats span residues 233–263, 264–294, 295–325, and 326–357; these read QTAP…GGGK, VQII…GGGS, VQIV…GGGQ, and VEVK…GGGN. Lys-243 participates in a covalent cross-link: Glycyl lysine isopeptide (Lys-Gly) (interchain with G-Cter in ubiquitin). Lys-248 carries the post-translational modification N6-acetyllysine; alternate. N6-methyllysine; alternate is present on Lys-248. Residue Lys-248 forms a Glycyl lysine isopeptide (Lys-Gly) (interchain with G-Cter in ubiquitin); alternate linkage. The residue at position 251 (Ser-251) is a Phosphoserine. A Glycyl lysine isopeptide (Lys-Gly) (interchain with G-Cter in ubiquitin) cross-link involves residue Lys-256. Lys-270 bears the N6-acetyllysine; alternate mark. Residue Lys-270 forms a Glycyl lysine isopeptide (Lys-Gly) (interchain with G-Cter in ubiquitin); alternate linkage. A phosphoserine mark is found at Ser-274 and Ser-278. Lys-279 is subject to N6-acetyllysine. Cys-280 and Cys-311 are disulfide-bonded. Ser-282 carries the phosphoserine modification. Lys-287 is subject to N6-acetyllysine; alternate. Residue Lys-287 forms a Glycyl lysine isopeptide (Lys-Gly) (interchain with G-Cter in ubiquitin); alternate linkage. The residue at position 294 (Ser-294) is a Phosphoserine. Lys-300 is subject to N6,N6-dimethyllysine; alternate. An N6-acetyllysine; alternate mark is found at Lys-300, Lys-306, and Lys-310. Residues Lys-300, Lys-306, and Lys-310 each participate in a glycyl lysine isopeptide (Lys-Gly) (interchain with G-Cter in ubiquitin); alternate cross-link. The residue at position 313 (Ser-313) is a Phosphoserine. N6-acetyllysine; alternate occurs at positions 320, 332, and 336. Glycyl lysine isopeptide (Lys-Gly) (interchain with G-Cter in ubiquitin); alternate cross-links involve residues Lys-320, Lys-332, and Lys-336. Omega-N-methylarginine is present on Arg-338. Residue Ser-341 is modified to Phosphoserine. Residue Lys-342 forms a Glycyl lysine isopeptide (Lys-Gly) (interchain with G-Cter in ubiquitin) linkage. Ser-345 carries the post-translational modification Phosphoserine. Lys-358 is modified (N6-acetyllysine; alternate). Residue Lys-358 forms a Glycyl lysine isopeptide (Lys-Gly) (interchain with G-Cter in ubiquitin); alternate linkage. A Glycyl lysine isopeptide (Lys-Gly) (interchain with G-Cter in ubiquitin) cross-link involves residue Lys-364. Position 374 is an N6-acetyllysine; alternate (Lys-374). Residue Lys-374 forms a Glycyl lysine isopeptide (Lys-Gly) (interchain with G-Cter in ubiquitin); alternate linkage. Tyr-383 is modified (phosphotyrosine). 2 positions are modified to phosphoserine: Ser-385 and Ser-389. The interval 387-406 is disordered; it reads VVSGDTSPRHLSNVSSTGSI. The segment covering 390–406 has biased composition (polar residues); that stretch reads GDTSPRHLSNVSSTGSI. Thr-392 carries the post-translational modification Phosphothreonine. Residues Ser-393, Ser-398, Ser-405, and Ser-411 each carry the phosphoserine modification. At Thr-416 the chain carries Phosphothreonine.

As to quaternary structure, interacts with MARK1, MARK2, MARK3 and MARK4. Interacts with SQSTM1 when polyubiquitinated. Interacts with PSMC2 through SQSTM1. Interacts with FKBP4. Binds to CSNK1D. Interacts with SGK1. Interacts with PIN1. Interacts with LRRK2. Interacts with LRP1, leading to endocytosis; this interaction is reduced in the presence of LRPAP1/RAP. Polyubiquitinated. Requires functional TRAF6 and may provoke SQSTM1-dependent degradation by the proteasome. In terms of processing, phosphorylation at various serine and threonine residues in S-P or T-P motifs by proline-directed protein kinases (PDPK1, CDK1, CDK5, GSK3, MAPK) (a few sites per protein in interphase, more in mitosis), and at serine residues in K-X-G-S motifs by MAP/microtubule affinity-regulating kinase (MARK1, MARK2, MARK3 or MARK4), causing detachment from microtubules, and their disassembly. Phosphorylation at Ser-345 by BRSK1 and BRSK2 in neurons affects ability to bind microtubules and plays a role in neuron polarization. Phosphorylated by PHK. Dephosphorylation at several serine and threonine residues by the serine/threonine phosphatase PPP5C. Post-translationally, hyperphosphorylated (in particular at Thr-170, Ser-191, Thr-194, Ser-251, and Ser-345) during hibernation. Phosphorylation is fully reversible after arousal. Highly phosphorylated tau contains a number of paired helical filaments (PHFs)-like epitopes. PHF-like phosphorylation is not associated with fibril formation. Distribution of PHF-like tau is more intense in the entorhinal cortex, hippocampus and isocortical areas. PHF-like phosphorylation-dephosphorylation during hibernation cycle is synchronized with regression-re-establishment of afferentation. It may reflect a protective mechanism in an unfavorable environment.

The protein resides in the cytoplasm. It is found in the cytosol. The protein localises to the cell membrane. Its subcellular location is the cytoskeleton. It localises to the cell projection. The protein resides in the axon. It is found in the dendrite. In terms of biological role, promotes microtubule assembly and stability, and might be involved in the establishment and maintenance of neuronal polarity. The C-terminus binds axonal microtubules while the N-terminus binds neural plasma membrane components, suggesting that tau functions as a linker protein between both. Axonal polarity is predetermined by tau localization (in the neuronal cell) in the domain of the cell body defined by the centrosome. The short isoforms allow plasticity of the cytoskeleton whereas the longer isoforms may preferentially play a role in its stabilization. The sequence is that of Microtubule-associated protein tau (MAPT) from Spermophilus citellus (European ground squirrel).